The primary structure comprises 263 residues: Small ribosomal subunit protein uS2 (263 aa).

Residues 230–249 show a composition bias toward basic and acidic residues; the sequence is GEALVNEEKEITDEEKKEVL. Residues 230–263 are disordered; sequence GEALVNEEKEITDEEKKEVLDEAMSEEDFGEEQE. Over residues 250 to 263 the composition is skewed to acidic residues; it reads DEAMSEEDFGEEQE.

This sequence belongs to the universal ribosomal protein uS2 family.

In Campylobacter jejuni subsp. jejuni serotype O:2 (strain ATCC 700819 / NCTC 11168), this protein is Small ribosomal subunit protein uS2.